Reading from the N-terminus, the 129-residue chain is Protein BEX2 (129 aa).

Positions 1–37 are disordered; that stretch reads MESKVEQGVKNLNMENDHQEKEEKEEKPQDASKRDPI. Residues 15 to 36 are compositionally biased toward basic and acidic residues; the sequence is ENDHQEKEEKEEKPQDASKRDP. R51 carries the post-translational modification Omega-N-methylarginine. Positions 118–122 are his cluster; sequence HHDHH. C126 contacts Zn(2+).

It belongs to the BEX family. As to quaternary structure, interacts with LMO2, possibly leading to regulate the transcriptional activity of a DNA-binding complex containing LMO2. Interacts with OMP. Primarily localized to neuronal cells within several regions of the brain, including the olfactory epithelium, bulb, peri/paraventricular nuclei, suprachiasmatic nucleus, arcuate nucleus, median eminence, lateral hypothalamic area, thalamus, hippocampus and cerebellum (at protein level).

The protein resides in the cytoplasm. It localises to the nucleus. In terms of biological role, regulator of mitochondrial apoptosis and G1 cell cycle. Regulates the level of PP2A regulatory subunit B and PP2A phosphatase activity. In absence of reductive stress, acts as a pseudosubstrate for the CRL2(FEM1B) complex: associates with FEM1B via zinc, thereby preventing association between FEM1B and its substrates. The chain is Protein BEX2 from Mus musculus (Mouse).